We begin with the raw amino-acid sequence, 520 residues long: General transcription factor 3C polypeptide 5 (520 aa).

At alanine 2 the chain carries N-acetylalanine. The interval 466–520 (LFSNTGKADRGKEQLMFESGEEEEEEEEEEEEEEEDFKPSDGSENEMETEILDYV) is disordered. Composition is skewed to acidic residues over residues 484-501 (SGEE…EEED) and 508-520 (SENE…LDYV).

This sequence belongs to the TFIIIC subunit 5 family. In terms of assembly, part of the TFIIIC subcomplex TFIIIC2, consisting of six subunits, GTF3C1, GTF3C2, GTF3C3, GTF3C4, GTF3C5 and GTF3C6. Interacts with BRF1, GTF3C6 and TBP.

The protein resides in the nucleus. In terms of biological role, involved in RNA polymerase III-mediated transcription. Integral, tightly associated component of the DNA-binding TFIIIC2 subcomplex that directly binds tRNA and virus-associated RNA promoters. This is General transcription factor 3C polypeptide 5 (Gtf3c5) from Mus musculus (Mouse).